The sequence spans 306 residues: Ribosomal protein L11 methyltransferase (306 aa).

S-adenosyl-L-methionine-binding residues include threonine 152, glycine 179, aspartate 201, and asparagine 243.

This sequence belongs to the methyltransferase superfamily. PrmA family.

It localises to the cytoplasm. The enzyme catalyses L-lysyl-[protein] + 3 S-adenosyl-L-methionine = N(6),N(6),N(6)-trimethyl-L-lysyl-[protein] + 3 S-adenosyl-L-homocysteine + 3 H(+). Functionally, methylates ribosomal protein L11. This Citrifermentans bemidjiense (strain ATCC BAA-1014 / DSM 16622 / JCM 12645 / Bem) (Geobacter bemidjiensis) protein is Ribosomal protein L11 methyltransferase.